We begin with the raw amino-acid sequence, 414 residues long: Glutamyl-tRNA reductase (414 aa).

Substrate contacts are provided by residues 51-54 (TCNR), Ser-107, 112-114 (EYE), and Gln-118. Cys-52 acts as the Nucleophile in catalysis. 187-192 (GAGEIG) lines the NADP(+) pocket.

Belongs to the glutamyl-tRNA reductase family. In terms of assembly, homodimer.

The enzyme catalyses (S)-4-amino-5-oxopentanoate + tRNA(Glu) + NADP(+) = L-glutamyl-tRNA(Glu) + NADPH + H(+). It participates in porphyrin-containing compound metabolism; protoporphyrin-IX biosynthesis; 5-aminolevulinate from L-glutamyl-tRNA(Glu): step 1/2. In terms of biological role, catalyzes the NADPH-dependent reduction of glutamyl-tRNA(Glu) to glutamate 1-semialdehyde (GSA). The sequence is that of Glutamyl-tRNA reductase from Sulfolobus acidocaldarius (strain ATCC 33909 / DSM 639 / JCM 8929 / NBRC 15157 / NCIMB 11770).